Here is a 104-residue protein sequence, read N- to C-terminus: DNA-directed RNA polymerase subunit omega (104 aa).

This sequence belongs to the RNA polymerase subunit omega family. In terms of assembly, the RNAP catalytic core consists of 2 alpha, 1 beta, 1 beta' and 1 omega subunit. When a sigma factor is associated with the core the holoenzyme is formed, which can initiate transcription.

The enzyme catalyses RNA(n) + a ribonucleoside 5'-triphosphate = RNA(n+1) + diphosphate. Its function is as follows. Promotes RNA polymerase assembly. Latches the N- and C-terminal regions of the beta' subunit thereby facilitating its interaction with the beta and alpha subunits. The protein is DNA-directed RNA polymerase subunit omega of Streptococcus suis (strain 05ZYH33).